A 161-amino-acid chain; its full sequence is MDKLREKINAARAETDEAVARAEAAEAKLKEVELQLSLKEQEYESLSRKSEAAESQLEELEEETKQLRLKADNEDIQKTEAEQLSRKVELLEEELETNDKLLRETTEKMRQTDVKAEHFERRVQSLERERDDMEQKLEEMTDKYTKVKAELDEVHQALEDL.

Positions 1-161 (MDKLREKINA…DEVHQALEDL (161 aa)) form a coiled coil. Residues 40 to 52 (EQEYESLSRKSEA) are compositionally biased toward basic and acidic residues. Disordered regions lie at residues 40–65 (EQEYESLSRKSEAAESQLEELEEETK) and 107–134 (EKMRQTDVKAEHFERRVQSLERERDDME).

As to quaternary structure, homodimer.

It is found in the cytoplasm. The protein localises to the cytoskeleton. Forms part of the F-actin contractile ring during cytokinesis. This is Tropomyosin (cdc8) from Schizosaccharomyces pombe (strain 972 / ATCC 24843) (Fission yeast).